A 433-amino-acid polypeptide reads, in one-letter code: Serine hydroxymethyltransferase (433 aa).

(6S)-5,6,7,8-tetrahydrofolate is bound at residue Ala121–Val123. N6-(pyridoxal phosphate)lysine is present on Lys227. A (6S)-5,6,7,8-tetrahydrofolate-binding site is contributed by Glu243.

This sequence belongs to the SHMT family. As to quaternary structure, homodimer. The cofactor is pyridoxal 5'-phosphate.

It is found in the cytoplasm. It functions in the pathway amino-acid biosynthesis; glycine biosynthesis; glycine from L-serine: step 1/1. In terms of biological role, catalyzes the reversible interconversion of serine and glycine with a modified folate serving as the one-carbon carrier. Also exhibits a pteridine-independent aldolase activity toward beta-hydroxyamino acids, producing glycine and aldehydes, via a retro-aldol mechanism. The sequence is that of Serine hydroxymethyltransferase from Saccharolobus islandicus (strain Y.G.57.14 / Yellowstone #1) (Sulfolobus islandicus).